The primary structure comprises 412 residues: Tyrosine--tRNA ligase (412 aa).

Tyr-31 is a binding site for L-tyrosine. Residues 36–45 (PTAASLHIGH) carry the 'HIGH' region motif. L-tyrosine-binding residues include Tyr-162 and Gln-166. Residues 222–226 (KIGKT) carry the 'KMSKS' region motif. Lys-225 provides a ligand contact to ATP. The 68-residue stretch at 345-412 (KRWIDLFVGV…KKKKLVLHLI (68 aa)) folds into the S4 RNA-binding domain.

It belongs to the class-I aminoacyl-tRNA synthetase family. TyrS type 1 subfamily. Homodimer.

It is found in the cytoplasm. The enzyme catalyses tRNA(Tyr) + L-tyrosine + ATP = L-tyrosyl-tRNA(Tyr) + AMP + diphosphate + H(+). Catalyzes the attachment of tyrosine to tRNA(Tyr) in a two-step reaction: tyrosine is first activated by ATP to form Tyr-AMP and then transferred to the acceptor end of tRNA(Tyr). In Chlamydia caviae (strain ATCC VR-813 / DSM 19441 / 03DC25 / GPIC) (Chlamydophila caviae), this protein is Tyrosine--tRNA ligase.